The chain runs to 214 residues: Probable transaldolase (214 aa).

Residue Lys-83 is the Schiff-base intermediate with substrate of the active site.

It belongs to the transaldolase family. Type 3B subfamily.

The protein localises to the cytoplasm. The catalysed reaction is D-sedoheptulose 7-phosphate + D-glyceraldehyde 3-phosphate = D-erythrose 4-phosphate + beta-D-fructose 6-phosphate. The protein operates within carbohydrate degradation; pentose phosphate pathway; D-glyceraldehyde 3-phosphate and beta-D-fructose 6-phosphate from D-ribose 5-phosphate and D-xylulose 5-phosphate (non-oxidative stage): step 2/3. In terms of biological role, transaldolase is important for the balance of metabolites in the pentose-phosphate pathway. The sequence is that of Probable transaldolase from Leptospira biflexa serovar Patoc (strain Patoc 1 / Ames).